A 71-amino-acid polypeptide reads, in one-letter code: Small ribosomal subunit protein bS21 (71 aa).

Belongs to the bacterial ribosomal protein bS21 family.

In Alteromonas mediterranea (strain DSM 17117 / CIP 110805 / LMG 28347 / Deep ecotype), this protein is Small ribosomal subunit protein bS21.